Consider the following 284-residue polypeptide: D-tagatose-1,6-bisphosphate aldolase subunit GatY (284 aa).

Residue D82 is the Proton donor of the active site. The Zn(2+) site is built by H83 and H180. G181 contributes to the dihydroxyacetone phosphate binding site. H208 provides a ligand contact to Zn(2+). Residues 209–211 (GAS) and 230–233 (NVAT) contribute to the dihydroxyacetone phosphate site.

The protein belongs to the class II fructose-bisphosphate aldolase family. TagBP aldolase GatY subfamily. As to quaternary structure, forms a complex with GatZ. Zn(2+) serves as cofactor.

The catalysed reaction is D-tagatofuranose 1,6-bisphosphate = D-glyceraldehyde 3-phosphate + dihydroxyacetone phosphate. It participates in carbohydrate metabolism; D-tagatose 6-phosphate degradation; D-glyceraldehyde 3-phosphate and glycerone phosphate from D-tagatose 6-phosphate: step 2/2. In terms of biological role, catalytic subunit of the tagatose-1,6-bisphosphate aldolase GatYZ, which catalyzes the reversible aldol condensation of dihydroxyacetone phosphate (DHAP or glycerone-phosphate) with glyceraldehyde 3-phosphate (G3P) to produce tagatose 1,6-bisphosphate (TBP). Requires GatZ subunit for full activity and stability. Is involved in the catabolism of galactitol. The polypeptide is D-tagatose-1,6-bisphosphate aldolase subunit GatY (Salmonella enteritidis PT4 (strain P125109)).